A 756-amino-acid polypeptide reads, in one-letter code: 5-methyltetrahydropteroyltriglutamate--homocysteine methyltransferase (756 aa).

Residues 16–19 (RELK) and Lys-116 contribute to the 5-methyltetrahydropteroyltri-L-glutamate site. L-homocysteine-binding positions include 435–437 (IGS) and Glu-488. Residues 435–437 (IGS) and Glu-488 contribute to the L-methionine site. 5-methyltetrahydropteroyltri-L-glutamate is bound by residues 519 to 520 (RC) and Trp-565. Asp-603 contributes to the L-homocysteine binding site. Asp-603 serves as a coordination point for L-methionine. Glu-609 is a binding site for 5-methyltetrahydropteroyltri-L-glutamate. Zn(2+) is bound by residues His-645, Cys-647, and Glu-669. The Proton donor role is filled by His-698. A Zn(2+)-binding site is contributed by Cys-730.

This sequence belongs to the vitamin-B12 independent methionine synthase family. Zn(2+) serves as cofactor.

It carries out the reaction 5-methyltetrahydropteroyltri-L-glutamate + L-homocysteine = tetrahydropteroyltri-L-glutamate + L-methionine. The protein operates within amino-acid biosynthesis; L-methionine biosynthesis via de novo pathway; L-methionine from L-homocysteine (MetE route): step 1/1. In terms of biological role, catalyzes the transfer of a methyl group from 5-methyltetrahydrofolate to homocysteine resulting in methionine formation. The polypeptide is 5-methyltetrahydropteroyltriglutamate--homocysteine methyltransferase (Marinobacter nauticus (strain ATCC 700491 / DSM 11845 / VT8) (Marinobacter aquaeolei)).